A 704-amino-acid chain; its full sequence is Elongation factor G 1 (704 aa).

The region spanning 8 to 285 is the tr-type G domain; that stretch reads EKIRNIGISA…AVCAFLPNPK (278 aa). Residues 17-24, 84-88, and 138-141 contribute to the GTP site; these read AHIDSGKT, DTPGH, and NKMD.

This sequence belongs to the TRAFAC class translation factor GTPase superfamily. Classic translation factor GTPase family. EF-G/EF-2 subfamily.

The protein resides in the cytoplasm. Catalyzes the GTP-dependent ribosomal translocation step during translation elongation. During this step, the ribosome changes from the pre-translocational (PRE) to the post-translocational (POST) state as the newly formed A-site-bound peptidyl-tRNA and P-site-bound deacylated tRNA move to the P and E sites, respectively. Catalyzes the coordinated movement of the two tRNA molecules, the mRNA and conformational changes in the ribosome. The polypeptide is Elongation factor G 1 (Myxococcus xanthus (strain DK1622)).